The primary structure comprises 196 residues: UMP-CMP kinase (196 aa).

13–18 (GAGKGT) lines the ATP pocket. S33 is subject to Phosphoserine. Positions 33-63 (SAGELLRDERKNPDSQYGELIEKYIKDGKIV) are NMP. Residue R39 participates in a ribonucleoside 5'-phosphate binding. 2 positions are modified to N6-acetyllysine: K43 and K55. Residues 61-63 (KIV) and 93-96 (GFPR) each bind a ribonucleoside 5'-phosphate. N100 is a binding site for CMP. K106 is subject to N6-succinyllysine. The LID stretch occupies residues 133 to 143 (ERGKSSGRSDD). R134 provides a ligand contact to ATP. The a ribonucleoside 5'-phosphate site is built by R140 and R151. K179 contacts ATP. The residue at position 180 (S180) is a Phosphoserine.

The protein belongs to the adenylate kinase family. UMP-CMP kinase subfamily. Monomer. Requires Mg(2+) as cofactor.

The protein resides in the nucleus. Its subcellular location is the cytoplasm. The catalysed reaction is CMP + ATP = CDP + ADP. The enzyme catalyses dCMP + ATP = dCDP + ADP. It carries out the reaction UMP + ATP = UDP + ADP. It catalyses the reaction a 2'-deoxyribonucleoside 5'-diphosphate + ATP = a 2'-deoxyribonucleoside 5'-triphosphate + ADP. The catalysed reaction is a ribonucleoside 5'-diphosphate + ATP = a ribonucleoside 5'-triphosphate + ADP. Catalyzes the phosphorylation of pyrimidine nucleoside monophosphates at the expense of ATP. Plays an important role in de novo pyrimidine nucleotide biosynthesis. Has preference for UMP and CMP as phosphate acceptors. Also displays broad nucleoside diphosphate kinase activity. The polypeptide is UMP-CMP kinase (Sus scrofa (Pig)).